Reading from the N-terminus, the 278-residue chain is Putative non-heme haloperoxidase (278 aa).

An AB hydrolase-1 domain is found at 24–240 (PLVFLHGLSV…STAKITNASF (217 aa)). Active-site residues include Ser-97 and Asp-221.

Belongs to the AB hydrolase superfamily.

This is Putative non-heme haloperoxidase (59.2) from Mycobacterium (Mycobacteriophage D29).